The sequence spans 232 residues: Putative quercetin 2,3-dioxygenase PA1210 (232 aa).

Residues histidine 57, histidine 59, histidine 101, and glutamate 103 each coordinate a divalent metal cation.

It belongs to the pirin family. It depends on a divalent metal cation as a cofactor.

The enzyme catalyses quercetin + O2 = 2-(3,4-dihydroxybenzoyloxy)-4,6-dihydroxybenzoate + CO. Its pathway is flavonoid metabolism; quercetin degradation. Its function is as follows. Putative quercetin 2,3-dioxygenase. The sequence is that of Putative quercetin 2,3-dioxygenase PA1210 from Pseudomonas aeruginosa (strain ATCC 15692 / DSM 22644 / CIP 104116 / JCM 14847 / LMG 12228 / 1C / PRS 101 / PAO1).